Reading from the N-terminus, the 393-residue chain is NAD(P)H-quinone oxidoreductase subunit H, chloroplastic (393 aa).

This sequence belongs to the complex I 49 kDa subunit family. NDH is composed of at least 16 different subunits, 5 of which are encoded in the nucleus.

Its subcellular location is the plastid. The protein localises to the chloroplast thylakoid membrane. The catalysed reaction is a plastoquinone + NADH + (n+1) H(+)(in) = a plastoquinol + NAD(+) + n H(+)(out). It carries out the reaction a plastoquinone + NADPH + (n+1) H(+)(in) = a plastoquinol + NADP(+) + n H(+)(out). In terms of biological role, NDH shuttles electrons from NAD(P)H:plastoquinone, via FMN and iron-sulfur (Fe-S) centers, to quinones in the photosynthetic chain and possibly in a chloroplast respiratory chain. The immediate electron acceptor for the enzyme in this species is believed to be plastoquinone. Couples the redox reaction to proton translocation, and thus conserves the redox energy in a proton gradient. In Manihot esculenta (Cassava), this protein is NAD(P)H-quinone oxidoreductase subunit H, chloroplastic.